Here is a 1350-residue protein sequence, read N- to C-terminus: uncharacterized protein (1350 aa).

Disordered regions lie at residues 348–371 (SLVG…LDDS) and 923–944 (SKME…RGTG). Positions 923–932 (SKMEGGERDA) are enriched in basic and acidic residues.

This is an uncharacterized protein from Ictalurid herpesvirus 1 (strain Auburn) (IcHV-1).